The following is a 223-amino-acid chain: Phosphoribosylformylglycinamidine synthase subunit PurQ (223 aa).

Residues 3–223 (FAVLVFPGSN…MVKSWREQHV (221 aa)) enclose the Glutamine amidotransferase type-1 domain. Cysteine 85 (nucleophile) is an active-site residue. Residues histidine 193 and glutamate 195 contribute to the active site.

Part of the FGAM synthase complex composed of 1 PurL, 1 PurQ and 2 PurS subunits.

Its subcellular location is the cytoplasm. It catalyses the reaction N(2)-formyl-N(1)-(5-phospho-beta-D-ribosyl)glycinamide + L-glutamine + ATP + H2O = 2-formamido-N(1)-(5-O-phospho-beta-D-ribosyl)acetamidine + L-glutamate + ADP + phosphate + H(+). The enzyme catalyses L-glutamine + H2O = L-glutamate + NH4(+). It participates in purine metabolism; IMP biosynthesis via de novo pathway; 5-amino-1-(5-phospho-D-ribosyl)imidazole from N(2)-formyl-N(1)-(5-phospho-D-ribosyl)glycinamide: step 1/2. Its function is as follows. Part of the phosphoribosylformylglycinamidine synthase complex involved in the purines biosynthetic pathway. Catalyzes the ATP-dependent conversion of formylglycinamide ribonucleotide (FGAR) and glutamine to yield formylglycinamidine ribonucleotide (FGAM) and glutamate. The FGAM synthase complex is composed of three subunits. PurQ produces an ammonia molecule by converting glutamine to glutamate. PurL transfers the ammonia molecule to FGAR to form FGAM in an ATP-dependent manner. PurS interacts with PurQ and PurL and is thought to assist in the transfer of the ammonia molecule from PurQ to PurL. The protein is Phosphoribosylformylglycinamidine synthase subunit PurQ of Staphylococcus aureus (strain Mu50 / ATCC 700699).